A 369-amino-acid polypeptide reads, in one-letter code: DNA polymerase processivity factor (369 aa).

The segment at 345–369 (IGSRKRGPSSPPFEREGKLAKVINQ) is disordered.

This sequence belongs to the herpesviridae DNA polymerase processivity factor family. As to quaternary structure, interacts with the DNA polymerase catalytic subunit. Interacts with the origin-binding protein.

It is found in the host nucleus. In terms of biological role, plays an essential role in viral DNA replication by acting as the polymerase accessory subunit. Associates with the viral polymerase to increase its processivity and forms high-affinity direct interactions with DNA. Facilitates the origin-binding protein UL9 loading onto DNA thus increasing its ability to assemble into a functional complex capable of unwinding duplex DNA. The sequence is that of DNA polymerase processivity factor (MDV055) from Gallus gallus (Chicken).